The primary structure comprises 142 residues: Ribosome-binding factor A (142 aa).

A disordered region spans residues 120–142 (TLGEVQSESDQPTTYETTTVNKT). Positions 123-142 (EVQSESDQPTTYETTTVNKT) are enriched in polar residues.

Belongs to the RbfA family. Monomer. Binds 30S ribosomal subunits, but not 50S ribosomal subunits or 70S ribosomes.

It localises to the cytoplasm. One of several proteins that assist in the late maturation steps of the functional core of the 30S ribosomal subunit. Associates with free 30S ribosomal subunits (but not with 30S subunits that are part of 70S ribosomes or polysomes). Required for efficient processing of 16S rRNA. May interact with the 5'-terminal helix region of 16S rRNA. The protein is Ribosome-binding factor A of Prochlorococcus marinus (strain MIT 9313).